The primary structure comprises 183 residues: ATP-dependent protease subunit HslV (183 aa).

Residue T13 is part of the active site. The Na(+) site is built by G168, C171, and T174.

This sequence belongs to the peptidase T1B family. HslV subfamily. As to quaternary structure, a double ring-shaped homohexamer of HslV is capped on each side by a ring-shaped HslU homohexamer. The assembly of the HslU/HslV complex is dependent on binding of ATP.

It localises to the cytoplasm. The enzyme catalyses ATP-dependent cleavage of peptide bonds with broad specificity.. With respect to regulation, allosterically activated by HslU binding. Its function is as follows. Protease subunit of a proteasome-like degradation complex believed to be a general protein degrading machinery. The protein is ATP-dependent protease subunit HslV of Xanthomonas euvesicatoria pv. vesicatoria (strain 85-10) (Xanthomonas campestris pv. vesicatoria).